The primary structure comprises 111 residues: Fluoride-specific ion channel FluC (111 aa).

The next 3 membrane-spanning stretches (helical) occupy residues 2 to 22, 36 to 56, and 71 to 91; these read GLLL…RFAL, GILL…AFLI, and FLLV…SLDI. The Na(+) site is built by Gly79 and Thr82.

Belongs to the fluoride channel Fluc/FEX (TC 1.A.43) family.

It localises to the cell inner membrane. It catalyses the reaction fluoride(in) = fluoride(out). Its activity is regulated as follows. Na(+) is not transported, but it plays an essential structural role and its presence is essential for fluoride channel function. In terms of biological role, fluoride-specific ion channel. Important for reducing fluoride concentration in the cell, thus reducing its toxicity. The protein is Fluoride-specific ion channel FluC of Francisella tularensis subsp. holarctica (strain FTNF002-00 / FTA).